A 348-amino-acid chain; its full sequence is Ribosomal RNA small subunit methyltransferase C (348 aa).

Belongs to the methyltransferase superfamily. RsmC family. As to quaternary structure, monomer.

Its subcellular location is the cytoplasm. The catalysed reaction is guanosine(1207) in 16S rRNA + S-adenosyl-L-methionine = N(2)-methylguanosine(1207) in 16S rRNA + S-adenosyl-L-homocysteine + H(+). In terms of biological role, specifically methylates the guanine in position 1207 of 16S rRNA in the 30S particle. This Pectobacterium atrosepticum (strain SCRI 1043 / ATCC BAA-672) (Erwinia carotovora subsp. atroseptica) protein is Ribosomal RNA small subunit methyltransferase C.